The chain runs to 592 residues: Aspartate--tRNA(Asp/Asn) ligase (592 aa).

Glu175 contacts L-aspartate. The segment at Gln199–Lys202 is aspartate. Arg221 contacts L-aspartate. Residues Arg221–Glu223 and Gln230 contribute to the ATP site. His450 is a binding site for L-aspartate. Glu483 lines the ATP pocket. L-aspartate is bound at residue Arg490. Gly535 to Arg538 lines the ATP pocket.

This sequence belongs to the class-II aminoacyl-tRNA synthetase family. Type 1 subfamily. Homodimer.

It is found in the cytoplasm. The catalysed reaction is tRNA(Asx) + L-aspartate + ATP = L-aspartyl-tRNA(Asx) + AMP + diphosphate. In terms of biological role, aspartyl-tRNA synthetase with relaxed tRNA specificity since it is able to aspartylate not only its cognate tRNA(Asp) but also tRNA(Asn). Reaction proceeds in two steps: L-aspartate is first activated by ATP to form Asp-AMP and then transferred to the acceptor end of tRNA(Asp/Asn). This chain is Aspartate--tRNA(Asp/Asn) ligase, found in Acinetobacter baumannii (strain AB307-0294).